The following is a 362-amino-acid chain: Ribosome-binding ATPase YchF (362 aa).

Positions Phe-3–Met-255 constitute an OBG-type G domain. Residue Asn-12–Thr-17 coordinates ATP. 2 residues coordinate Mg(2+): Ser-16 and Thr-36. In terms of domain architecture, TGS spans Asn-277–Phe-360.

Belongs to the TRAFAC class OBG-HflX-like GTPase superfamily. OBG GTPase family. YchF/OLA1 subfamily. It depends on Mg(2+) as a cofactor.

In terms of biological role, ATPase that binds to both the 70S ribosome and the 50S ribosomal subunit in a nucleotide-independent manner. The sequence is that of Ribosome-binding ATPase YchF from Buchnera aphidicola subsp. Schizaphis graminum (strain Sg).